We begin with the raw amino-acid sequence, 1400 residues long: Bromodomain-containing protein 4 (1400 aa).

The disordered stretch occupies residues 1 to 58; the sequence is MSTESGPGTRLRNLPVMGDGLETSQMSTTQAQAQPQPANAASTNPPPPETSNPNKPKR. Over residues 23–43 the composition is skewed to low complexity; it reads TSQMSTTQAQAQPQPANAAST. The Bromo 1 domain occupies 58–164; that stretch reads RQTNQLQYLL…KLFLQKINEL (107 aa). A Glycyl lysine isopeptide (Lys-Gly) (interchain with G-Cter in SUMO2) cross-link involves residue Lys-99. 2 disordered regions span residues 176–353 and 461–616; these read AKGR…KISE and EPEE…YEEK. Over residues 197–212 the composition is skewed to low complexity; sequence PNTTQASTSPQTQTPQ. Over residues 244-267 the composition is skewed to pro residues; that stretch reads PPQPLQTPSPVPPQPPPPPAPVPQ. Positions 321–337 are enriched in basic and acidic residues; that stretch reads PRRESSRPVKPPKKDVP. Positions 349 to 458 constitute a Bromo 2 domain; the sequence is SKISEQLKCC…DVFEMRFAKM (110 aa). Position 471 is a phosphoserine (Ser-471). Over residues 479-498 the composition is skewed to low complexity; sequence KVVAPPSSSDSSSDSSSDSD. 3 positions are modified to phosphoserine; by CK2: Ser-485, Ser-489, and Ser-493. The segment at 485 to 504 is NPS region; it reads SSSDSSSDSSSDSDSSTDDS. Ser-495 carries the post-translational modification Phosphoserine. Residues Ser-499, Ser-500, and Ser-504 each carry the phosphoserine; by CK2 modification. A BID region region spans residues 525-580; the sequence is QLAALSQPQQNKPKKKEKDKKEKKKEKHKKKEEVEENKKSKTKELPPKKTKKNNSS. A compositionally biased stretch (basic residues) spans 536-554; sequence KPKKKEKDKKEKKKEKHKK. Residues 555–571 are compositionally biased toward basic and acidic residues; it reads KEEVEENKKSKTKELPP. A Glycyl lysine isopeptide (Lys-Gly) (interchain with G-Cter in SUMO2) cross-link involves residue Lys-586. Residues 601 to 683 form the NET domain; that stretch reads ESEEEDKCKP…SCLRKKRKPQ (83 aa). The residue at position 602 (Ser-602) is a Phosphoserine. Over residues 606 to 616 the composition is skewed to basic and acidic residues; that stretch reads DKCKPMSYEEK. Glycyl lysine isopeptide (Lys-Gly) (interchain with G-Cter in SUMO2) cross-links involve residues Lys-646 and Lys-695. Positions 675–1125 are disordered; sequence CLRKKRKPQA…GCPPASPAAV (451 aa). Residues 700–713 show a composition bias toward low complexity; it reads SSSESESTSESSSS. A compositionally biased stretch (basic residues) spans 725–745; the sequence is KSKKKGHTGRDQKKHHHHHHP. Pro residues-rich tracts occupy residues 748 to 787, 835 to 848, 883 to 892, and 900 to 909; these read QPAPAPVPQQPPPPPQQPPPPPPPQQQQQQPPPPPPPPSM, PELPPHLPQPPEHS, PPKPTRPPAV, and PLLPQPPMAQ. The span at 928-938 shows a compositional bias: low complexity; the sequence is MQMQLYLQQLQ. Composition is skewed to pro residues over residues 955 to 966, 975 to 1000, and 1013 to 1037; these read QPPPPLPPPPHP, PQPPPPPPPQPQPPPQQQHQPPPRPV, and QPPPPPGQQPTHPPPGQQPPPPQPA. Residues 1050 to 1400 are C-terminal (CTD) region; it reads RHHKSDPYSA…LLSIFEENLF (351 aa). Residue Lys-1053 forms a Glycyl lysine isopeptide (Lys-Gly) (interchain with G-Cter in SUMO2) linkage. Residues 1075–1084 show a composition bias toward polar residues; that stretch reads QMPQFQSLTH. Low complexity predominate over residues 1085–1095; that stretch reads QSPPQQNVQPK. Lys-1147 bears the N6-acetyllysine; alternate mark. A Glycyl lysine isopeptide (Lys-Gly) (interchain with G-Cter in SUMO1); alternate cross-link involves residue Lys-1147. Lys-1147 is covalently cross-linked (Glycyl lysine isopeptide (Lys-Gly) (interchain with G-Cter in SUMO2); alternate). Residues Ser-1153 and Ser-1162 each carry the phosphoserine modification. The interval 1155 to 1377 is disordered; sequence IIRSEPFSTS…KREQERRRRE (223 aa). A compositionally biased stretch (basic and acidic residues) spans 1211-1232; that stretch reads PDKDKQKQEPKTPVAPKKDLKI. Residue Lys-1233 forms a Glycyl lysine isopeptide (Lys-Gly) (interchain with G-Cter in SUMO2) linkage. A phosphoserine mark is found at Ser-1237 and Ser-1240. The span at 1247-1258 shows a compositional bias: low complexity; the sequence is TTPSSTAKSSSD. Positions 1259-1320 are enriched in basic and acidic residues; the sequence is SFEHFRRAAR…AHEEARRRQE (62 aa). Low complexity predominate over residues 1321–1357; it reads QQQQQQQQRQEQQQQQQQAAAVAAASAPQAQSSQPQS. Residues 1361–1377 show a composition bias toward basic and acidic residues; the sequence is QQRELARKREQERRRRE.

Belongs to the BET family. As to quaternary structure, binds acetylated histone H4. Interacts with p53/TP53; the interaction is direct. Interacts (via CTD region) with CDK9 and CCNT1, acting as an associated component of P-TEFb complex. Interacts with RELA (when acetylated at 'Lys-310'). Interacts (via NET domain) with NSD3, CHD4, BICRA and ATAD5. The interaction with BICRA bridges BRD4 to the GBAF complex. Interacts (via NET domain) with JMJD6 (via JmjC and N-terminal domains); the interaction is stronger in presence of ssRNA and recruits JMJD6 on distal enhancers. Interacts with NSD3. Interacts with NIPBL. Phosphorylation by CK2 disrupt the intramolecular binding between the bromo domain 2 and the NPS region and promotes binding between the NPS and the BID regions, leading to activate the protein and promote binding to acetylated histones. In absence of phosphorylation, BRD4 does not localize to p53/TP53 target gene promoters, phosphorylation promoting recruitment to p53/TP53 target promoters.

Its subcellular location is the nucleus. It localises to the chromosome. Chromatin reader protein that recognizes and binds acetylated histones and plays a key role in transmission of epigenetic memory across cell divisions and transcription regulation. Remains associated with acetylated chromatin throughout the entire cell cycle and provides epigenetic memory for postmitotic G1 gene transcription by preserving acetylated chromatin status and maintaining high-order chromatin structure. During interphase, plays a key role in regulating the transcription of signal-inducible genes by associating with the P-TEFb complex and recruiting it to promoters. Also recruits P-TEFb complex to distal enhancers, so called anti-pause enhancers in collaboration with JMJD6. BRD4 and JMJD6 are required to form the transcriptionally active P-TEFb complex by displacing negative regulators such as HEXIM1 and 7SKsnRNA complex from P-TEFb, thereby transforming it into an active form that can then phosphorylate the C-terminal domain (CTD) of RNA polymerase II. Regulates differentiation of naive CD4(+) T-cells into T-helper Th17 by promoting recruitment of P-TEFb to promoters. Promotes phosphorylation of 'Ser-2' of the C-terminal domain (CTD) of RNA polymerase II. According to a report, directly acts as an atypical protein kinase and mediates phosphorylation of 'Ser-2' of the C-terminal domain (CTD) of RNA polymerase II; these data however need additional evidences in vivo. In addition to acetylated histones, also recognizes and binds acetylated RELA, leading to further recruitment of the P-TEFb complex and subsequent activation of NF-kappa-B. Also acts as a regulator of p53/TP53-mediated transcription: following phosphorylation by CK2, recruited to p53/TP53 specific target promoters. This Mus musculus (Mouse) protein is Bromodomain-containing protein 4 (Brd4).